The following is a 179-amino-acid chain: Large ribosomal subunit protein uL5 (179 aa).

This sequence belongs to the universal ribosomal protein uL5 family. In terms of assembly, part of the 50S ribosomal subunit; part of the 5S rRNA/L5/L18/L25 subcomplex. Contacts the 5S rRNA and the P site tRNA. Forms a bridge to the 30S subunit in the 70S ribosome.

This is one of the proteins that bind and probably mediate the attachment of the 5S RNA into the large ribosomal subunit, where it forms part of the central protuberance. In the 70S ribosome it contacts protein S13 of the 30S subunit (bridge B1b), connecting the 2 subunits; this bridge is implicated in subunit movement. Contacts the P site tRNA; the 5S rRNA and some of its associated proteins might help stabilize positioning of ribosome-bound tRNAs. The sequence is that of Large ribosomal subunit protein uL5 from Clostridium novyi (strain NT).